The following is a 136-amino-acid chain: Small ribosomal subunit protein uS12 (136 aa).

Position 89 is a 3-methylthioaspartic acid (D89). The tract at residues 101 to 136 (SLDTSGVADRKQSRSKYGAKQPKAGVPAPVKGKGKR) is disordered.

This sequence belongs to the universal ribosomal protein uS12 family. In terms of assembly, part of the 30S ribosomal subunit. Contacts proteins S8 and S17. May interact with IF1 in the 30S initiation complex.

In terms of biological role, with S4 and S5 plays an important role in translational accuracy. Its function is as follows. Interacts with and stabilizes bases of the 16S rRNA that are involved in tRNA selection in the A site and with the mRNA backbone. Located at the interface of the 30S and 50S subunits, it traverses the body of the 30S subunit contacting proteins on the other side and probably holding the rRNA structure together. The combined cluster of proteins S8, S12 and S17 appears to hold together the shoulder and platform of the 30S subunit. This Pelodictyon phaeoclathratiforme (strain DSM 5477 / BU-1) protein is Small ribosomal subunit protein uS12.